Consider the following 414-residue polypeptide: Serine/threonine transporter SstT (414 aa).

8 helical membrane-spanning segments follow: residues 22–42 (GLVL…TIGF), 54–74 (IFVK…VMAA), 89–109 (IIVL…IAGF), 148–168 (AIFK…GLAL), 189–209 (IVHV…AETL), 223–243 (LLAV…PILV), 305–325 (MAGA…TLGL), and 337–357 (IVAA…LLLI).

The protein belongs to the dicarboxylate/amino acid:cation symporter (DAACS) (TC 2.A.23) family.

Its subcellular location is the cell inner membrane. It carries out the reaction L-serine(in) + Na(+)(in) = L-serine(out) + Na(+)(out). The catalysed reaction is L-threonine(in) + Na(+)(in) = L-threonine(out) + Na(+)(out). In terms of biological role, involved in the import of serine and threonine into the cell, with the concomitant import of sodium (symport system). This chain is Serine/threonine transporter SstT, found in Haemophilus influenzae (strain PittEE).